The following is a 164-amino-acid chain: NAD(P)H-quinone oxidoreductase subunit I, chloroplastic (164 aa).

2 4Fe-4S ferredoxin-type domains span residues 55 to 84 (GRIHFEFDKCIACEVCVRVCPIDLPVVDWK) and 95 to 124 (LNYSIDFGICIFCGNCVEYCPTNCLSMTEE). Positions 64, 67, 70, 74, 104, 107, 110, and 114 each coordinate [4Fe-4S] cluster.

This sequence belongs to the complex I 23 kDa subunit family. As to quaternary structure, NDH is composed of at least 16 different subunits, 5 of which are encoded in the nucleus. [4Fe-4S] cluster is required as a cofactor.

Its subcellular location is the plastid. It localises to the chloroplast thylakoid membrane. It carries out the reaction a plastoquinone + NADH + (n+1) H(+)(in) = a plastoquinol + NAD(+) + n H(+)(out). The catalysed reaction is a plastoquinone + NADPH + (n+1) H(+)(in) = a plastoquinol + NADP(+) + n H(+)(out). Its function is as follows. NDH shuttles electrons from NAD(P)H:plastoquinone, via FMN and iron-sulfur (Fe-S) centers, to quinones in the photosynthetic chain and possibly in a chloroplast respiratory chain. The immediate electron acceptor for the enzyme in this species is believed to be plastoquinone. Couples the redox reaction to proton translocation, and thus conserves the redox energy in a proton gradient. The sequence is that of NAD(P)H-quinone oxidoreductase subunit I, chloroplastic from Daucus carota (Wild carrot).